Consider the following 371-residue polypeptide: Alanine dehydrogenase (371 aa).

Residues R15 and K75 each coordinate substrate. H96 acts as the Proton donor/acceptor in catalysis. Residues S134, 178-179, D198, K203, S220, 239-240, 267-270, R279, and 298-301 contribute to the NAD(+) site; these read TA, VL, IAID, and VANM. The active-site Proton donor/acceptor is D270. E323 and H327 together coordinate Mg(2+).

This sequence belongs to the AlaDH/PNT family. Homohexamer. Trimer of dimers. Requires Mg(2+) as cofactor.

It is found in the secreted. It carries out the reaction L-alanine + NAD(+) + H2O = pyruvate + NH4(+) + NADH + H(+). Its pathway is amino-acid degradation; L-alanine degradation via dehydrogenase pathway; NH(3) and pyruvate from L-alanine: step 1/1. Its activity is regulated as follows. Inhibited by CuSO(4) and ZnCl(2). Catalyzes the reversible reductive amination of pyruvate to L-alanine. However, since the physiological environment of M.tuberculosis has a neutral pH, it can be assumed that the enzyme catalyzes exclusively the formation of L-alanine. May play a role in cell wall synthesis as L-alanine is an important constituent of the peptidoglycan layer. This is Alanine dehydrogenase (ald) from Mycobacterium tuberculosis (strain ATCC 25618 / H37Rv).